The chain runs to 269 residues: MPELPEVETSRRGIEPYLVGHSIQYAVVRNARLRWPVSEQILALSDQPVLSVQRRAKYLLIELASGWIIVHLGMSGSLRMLAEETEAGKHDHVDLVISNGMTLRYTDPRRFGAWLWCDDLATSNVLAHLGPEPLSEAFTGAYLYEKSRNKRTLIKPWLMDNKLVVGVGNIYASESLFTAGILPDRPAGSLSKVEAEVLVATIKAVLLRSIEQGGTTLRDFLQSDGKPGYFAQELQVYGRAGEPCRACGTPIESAKHGQRSTFFCPRCQR.

P2 serves as the catalytic Schiff-base intermediate with DNA. E3 functions as the Proton donor in the catalytic mechanism. Residue K57 is the Proton donor; for beta-elimination activity of the active site. Positions 90, 109, and 150 each coordinate DNA. An FPG-type zinc finger spans residues 235-269 (QVYGRAGEPCRACGTPIESAKHGQRSTFFCPRCQR). R259 functions as the Proton donor; for delta-elimination activity in the catalytic mechanism.

The protein belongs to the FPG family. In terms of assembly, monomer. Zn(2+) serves as cofactor.

The catalysed reaction is Hydrolysis of DNA containing ring-opened 7-methylguanine residues, releasing 2,6-diamino-4-hydroxy-5-(N-methyl)formamidopyrimidine.. The enzyme catalyses 2'-deoxyribonucleotide-(2'-deoxyribose 5'-phosphate)-2'-deoxyribonucleotide-DNA = a 3'-end 2'-deoxyribonucleotide-(2,3-dehydro-2,3-deoxyribose 5'-phosphate)-DNA + a 5'-end 5'-phospho-2'-deoxyribonucleoside-DNA + H(+). Involved in base excision repair of DNA damaged by oxidation or by mutagenic agents. Acts as a DNA glycosylase that recognizes and removes damaged bases. Has a preference for oxidized purines, such as 7,8-dihydro-8-oxoguanine (8-oxoG). Has AP (apurinic/apyrimidinic) lyase activity and introduces nicks in the DNA strand. Cleaves the DNA backbone by beta-delta elimination to generate a single-strand break at the site of the removed base with both 3'- and 5'-phosphates. The chain is Formamidopyrimidine-DNA glycosylase from Serratia proteamaculans (strain 568).